Reading from the N-terminus, the 54-residue chain is Soricidin (54 aa).

Disulfide bonds link Cys-2–Cys-23, Cys-6–Cys-27, and Cys-9–Cys-41.

It belongs to the opioid neuropeptide precursor family. As to quaternary structure, member of a multiprotein complex. Salivary gland.

It localises to the secreted. In terms of biological role, paralytic toxin that immobilizes a mealworm for 7 days. Inhibits the transient receptor potential cation channel subfamily V member 6 (TRPV6). In Blarina brevicauda (Northern short-tailed shrew), this protein is Soricidin.